Here is a 715-residue protein sequence, read N- to C-terminus: Polyribonucleotide nucleotidyltransferase (715 aa).

Positions 498 and 504 each coordinate Mg(2+). One can recognise a KH domain in the interval 565–625 (PKVCMMQIKP…ETVKKTVAFI (61 aa)). An S1 motif domain is found at 635-706 (GTCYQASILR…DRGRIDFLLL (72 aa)).

It belongs to the polyribonucleotide nucleotidyltransferase family. It depends on Mg(2+) as a cofactor.

It localises to the cytoplasm. It catalyses the reaction RNA(n+1) + phosphate = RNA(n) + a ribonucleoside 5'-diphosphate. Functionally, involved in mRNA degradation. Catalyzes the phosphorolysis of single-stranded polyribonucleotides processively in the 3'- to 5'-direction. This chain is Polyribonucleotide nucleotidyltransferase, found in Onion yellows phytoplasma (strain OY-M).